Consider the following 125-residue polypeptide: Ribosome-binding factor A (125 aa).

This sequence belongs to the RbfA family. In terms of assembly, monomer. Binds 30S ribosomal subunits, but not 50S ribosomal subunits or 70S ribosomes.

Its subcellular location is the cytoplasm. Its function is as follows. One of several proteins that assist in the late maturation steps of the functional core of the 30S ribosomal subunit. Associates with free 30S ribosomal subunits (but not with 30S subunits that are part of 70S ribosomes or polysomes). Required for efficient processing of 16S rRNA. May interact with the 5'-terminal helix region of 16S rRNA. The chain is Ribosome-binding factor A from Kosmotoga olearia (strain ATCC BAA-1733 / DSM 21960 / TBF 19.5.1).